A 151-amino-acid polypeptide reads, in one-letter code: Ribonuclease H (151 aa).

In terms of domain architecture, RNase H type-1 spans M1–A146. Mg(2+)-binding residues include D9, E52, D74, and D138.

It belongs to the RNase H family. As to quaternary structure, monomer. It depends on Mg(2+) as a cofactor.

The protein resides in the cytoplasm. It catalyses the reaction Endonucleolytic cleavage to 5'-phosphomonoester.. In terms of biological role, endonuclease that specifically degrades the RNA of RNA-DNA hybrids. This Cereibacter sphaeroides (strain ATCC 17029 / ATH 2.4.9) (Rhodobacter sphaeroides) protein is Ribonuclease H.